Reading from the N-terminus, the 494-residue chain is UPF0371 protein SP70585_0405 (494 aa).

It belongs to the UPF0371 family.

This chain is UPF0371 protein SP70585_0405, found in Streptococcus pneumoniae (strain 70585).